The primary structure comprises 355 residues: Uroporphyrinogen decarboxylase (355 aa).

Substrate-binding positions include 23–27 (RQAGR), aspartate 72, tyrosine 148, serine 203, and histidine 321.

The protein belongs to the uroporphyrinogen decarboxylase family. Homodimer.

Its subcellular location is the cytoplasm. It catalyses the reaction uroporphyrinogen III + 4 H(+) = coproporphyrinogen III + 4 CO2. The protein operates within porphyrin-containing compound metabolism; protoporphyrin-IX biosynthesis; coproporphyrinogen-III from 5-aminolevulinate: step 4/4. Its function is as follows. Catalyzes the decarboxylation of four acetate groups of uroporphyrinogen-III to yield coproporphyrinogen-III. This is Uroporphyrinogen decarboxylase from Chloroflexus aurantiacus (strain ATCC 29366 / DSM 635 / J-10-fl).